Reading from the N-terminus, the 196-residue chain is Mitochondrial inner membrane protein SHH3 (196 aa).

The transit peptide at 1 to 53 (MKATIQRVTSVFGVPRASVFVPRISTPFILHNYISNGRMDLFSKEFHNGRVSK) directs the protein to the mitochondrion. Over 54–97 (SDLWSSNKEEELLVSQRKKRPISPHLTVYEPEMSWYLSSLHRIS) the chain is Mitochondrial matrix. The a ubiquinone site is built by S91 and R95. Residues 98-118 (GVLLALGFYAFTITLGVTTIM) form a helical membrane-spanning segment. Topologically, residues 119 to 137 (GMDTTFQDLNKWYHEKMPK) are mitochondrial intermembrane. A helical membrane pass occupies residues 138–160 (WSQWVAKGSAAYLFAFHFGNGIR). H154 is a binding site for heme. Topologically, residues 161 to 174 (HLIWDMGYELTNRG) are mitochondrial matrix. A helical membrane pass occupies residues 175–195 (VIKTGSIVLAGTLVLGTYLLA). Q196 is a topological domain (mitochondrial intermembrane).

Belongs to the cytochrome b560 family.

It localises to the mitochondrion inner membrane. Homolog of SDH3, but seems not to be a stoichiometric subunit of either the succinate dehydrogenase (SDH) complex or the mitochondrial inner membrane translocase TIM22 complex. This Saccharomyces cerevisiae (strain ATCC 204508 / S288c) (Baker's yeast) protein is Mitochondrial inner membrane protein SHH3.